Consider the following 293-residue polypeptide: NAD kinase (293 aa).

The active-site Proton acceptor is the Asp73. NAD(+)-binding positions include 73–74 (DG), 147–148 (NE), Arg175, Asp177, and 188–193 (TAYSMS).

This sequence belongs to the NAD kinase family. The cofactor is a divalent metal cation.

Its subcellular location is the cytoplasm. The catalysed reaction is NAD(+) + ATP = ADP + NADP(+) + H(+). In terms of biological role, involved in the regulation of the intracellular balance of NAD and NADP, and is a key enzyme in the biosynthesis of NADP. Catalyzes specifically the phosphorylation on 2'-hydroxyl of the adenosine moiety of NAD to yield NADP. This Colwellia psychrerythraea (strain 34H / ATCC BAA-681) (Vibrio psychroerythus) protein is NAD kinase.